Here is a 143-residue protein sequence, read N- to C-terminus: Small ribosomal subunit protein uS9 (143 aa).

The disordered stretch occupies residues 123–143 (RPEPKKFGGRGARSRFQKSYR). A compositionally biased stretch (basic residues) spans 134–143 (ARSRFQKSYR).

The protein belongs to the universal ribosomal protein uS9 family.

This Kluyveromyces lactis (strain ATCC 8585 / CBS 2359 / DSM 70799 / NBRC 1267 / NRRL Y-1140 / WM37) (Yeast) protein is Small ribosomal subunit protein uS9 (RPS16).